Reading from the N-terminus, the 1338-residue chain is Thioester-containing protein 1 allele S3 (1338 aa).

The N-terminal stretch at 1–21 is a signal peptide; that stretch reads MWQFIRSRILTVIIFIGAAHG. N-linked (GlcNAc...) asparagine glycosylation is found at Asn68, Asn199, Asn242, Asn312, and Asn481. Positions 580–609 are may contain the cleavage site; it reads ENEFDIFHSLGLFARTLDDILFDSANEKTG. N-linked (GlcNAc...) asparagine glycans are attached at residues Asn637, Asn728, Asn813, and Asn828. The segment at residues 859-862 is a cross-link (isoglutamyl cysteine thioester (Cys-Gln)); the sequence is CGEQ. Intrachain disulfides connect Cys1217–Cys1283, Cys1326–Cys1338, and Cys1329–Cys1334.

In terms of assembly, heterodimer of a TEP1-N chain and an TEP1-C chain non-covalently linked. Forms a complex composed of TEP1-N and TEP1-C heterodimer, LRIM1 and APL1C; the interaction stabilizes TEP1-N and TEP1-C heterodimer, prevents its binding to tissues while circulating in the hemolymph and protects the thioester bond from hydrolysis. Mature TEP1 and to a lesser extent full-length TEP1 interact with SPCLIP1; the interaction is induced by microbial infection. In the hemolymph, the full-length protein is cleaved by an unknow protease into a 75kDa N-terminal (TEP1-N) chain and an 80kDa C-terminal (TEP1-C) chain which remain non-covalently linked. The TEP1-C chain contains the thioester bond which covalently binds to the pathogen surface. Cleavage is induced by bacterial infection or aseptic wound injury. During embryonic and pupal development, the cleaved form is the predominant form. In terms of processing, N-glycosylated.

It is found in the secreted. Plays an essential role in the innate immune response against bacteria, fungi and protozoa infection. After proteolytic cleavage, the protein C-terminus binds covalently through a thioester bond to the pathogen surface resulting in pathogen clearance either by melanization or lysis. Initiate the recruitment and activation of a cascade of proteases, mostly of CLIP-domain serine proteases, which leads to the proteolytic cleavage of the prophenoloxidase (PPO) into active phenoloxidase (PO), the rate-limiting enzyme in melanin biosynthesis. In response to parasite P.berghei-mediated infection, binds to and mediates killing of ookinetes, as they egress from midgut epithelial cells into the basal labyrinth, by both lysis and melanization. During bacterial infection, binds to both Gram-positive and Gram-negative bacteria but only promotes phagocytosis of Gram-negative bacteria. Promotes the accumulation of SPCLIP1 onto the surface of P.berghei ookinetes and bacterium E.coli which leads to the melanization of the pathogen. Recruits CLIPA2 to bacteria surface. In response to bacterial infection, required for periostial hemocyte aggregation, but not for the aggregation of sessile hemocytes in non-periostial regions. During the late stage of fungus B.bassiana-mediated infection, required for the initiation of hyphae melanization by binding to the surface of hyphae and recruiting prophenoloxidase PPO to them. Plays a role in male fertility by binding to defective sperm cells and promoting their removal during spermatogenesis. Its function is as follows. Binds to and mediates killing of parasite P.bergei ookinetes by lysis. Functionally, binds covalently through a thioester bond to the pathogen surface resulting in pathogen clearance. In Anopheles gambiae (African malaria mosquito), this protein is Thioester-containing protein 1 allele S3.